Reading from the N-terminus, the 627-residue chain is Altered inheritance of mitochondria protein 9, mitochondrial (627 aa).

The transit peptide at 1–43 directs the protein to the mitochondrion; it reads MIRYTVAGHSRRCVVGASKRVGAIKCITVAATKRFISNKPNEV.

This sequence belongs to the AIM9 family.

The protein resides in the mitochondrion. The protein is Altered inheritance of mitochondria protein 9, mitochondrial (AIM9) of Saccharomyces cerevisiae (strain RM11-1a) (Baker's yeast).